The sequence spans 70 residues: Conotoxin Vc6.10 (70 aa).

The first 19 residues, 1–19 (MEKLTILLLVAAVLTSTQA), serve as a signal peptide directing secretion. Positions 20–40 (LIQGGADERQKAKINFLSRSD) are excised as a propeptide. Intrachain disulfides connect cysteine 43-cysteine 57, cysteine 50-cysteine 62, and cysteine 56-cysteine 69.

This sequence belongs to the conotoxin O2 superfamily. As to expression, expressed by the venom duct.

It localises to the secreted. In terms of biological role, inhibits voltage-gated ion channels. This Conus victoriae (Queen Victoria cone) protein is Conotoxin Vc6.10.